Here is a 147-residue protein sequence, read N- to C-terminus: Mitochondrial import receptor subunit TOM20 homolog (147 aa).

Over 1–3 the chain is Mitochondrial intermembrane; sequence MVV. A helical membrane pass occupies residues 4–26; that stretch reads VGKTSAIAAGVCGALFLGYCIYF. Residues 27–147 are Cytoplasmic-facing; the sequence is DRKRRSDPNF…AQNLAEDDVE (121 aa).

This sequence belongs to the Tom20 family. As to quaternary structure, forms part of the preprotein translocase complex of the outer mitochondrial membrane (TOM complex). Interacts with tom22.

It is found in the mitochondrion outer membrane. Central component of the receptor complex responsible for the recognition and translocation of cytosolically synthesized mitochondrial preproteins. Together with tom22 functions as the transit peptide receptor at the surface of the mitochondrion outer membrane and facilitates the movement of preproteins into the tom40 translocation pore. The chain is Mitochondrial import receptor subunit TOM20 homolog (tomm20) from Xenopus tropicalis (Western clawed frog).